The chain runs to 320 residues: Ribosomal RNA large subunit methyltransferase F (320 aa).

Positions 1–20 (MHKSANSKTRKQSKGLHPRN) are disordered.

This sequence belongs to the methyltransferase superfamily. METTL16/RlmF family.

Its subcellular location is the cytoplasm. The catalysed reaction is adenosine(1618) in 23S rRNA + S-adenosyl-L-methionine = N(6)-methyladenosine(1618) in 23S rRNA + S-adenosyl-L-homocysteine + H(+). Specifically methylates the adenine in position 1618 of 23S rRNA. The polypeptide is Ribosomal RNA large subunit methyltransferase F (Saccharophagus degradans (strain 2-40 / ATCC 43961 / DSM 17024)).